The following is a 548-amino-acid chain: Probable zinc metalloprotease EGY1, chloroplastic (548 aa).

The transit peptide at Met-1–Arg-18 directs the protein to the chloroplast. The segment covering Asn-61 to Lys-76 has biased composition (basic and acidic residues). The interval Asn-61–Ile-116 is disordered. A compositionally biased stretch (polar residues) spans Asn-103–Ile-116. The next 8 helical transmembrane spans lie at Tyr-242–Ala-262, Leu-290–Phe-310, Leu-326–Phe-346, Leu-361–Leu-381, Ala-388–Ile-408, Ala-416–Leu-436, Met-474–Ile-494, and Ala-516–Leu-536.

This sequence belongs to the peptidase M50B family. In terms of tissue distribution, expressed in roots, leaves, cotyledons, hypocotyls, stems, flowers and siliques.

It is found in the plastid. Its subcellular location is the chloroplast membrane. Membrane-associated and ATP-independent metalloprotease required for development of both thylakoid grana and well-organized lamellae in chloroplast. Required for the accumulation of chlorophyll and chlorophyll a/b binding (CAB) proteins (from both PS I and PS II) in chloroplast membranes, and for grana formation and normal chloroplast development. Involved in the regulation of nuclear gene expression in response to ammonium stress and interacts with ABA signaling. Carries out beta-casein degradation in an ATP-independent manner in vitro. The chain is Probable zinc metalloprotease EGY1, chloroplastic (EGY1) from Arabidopsis thaliana (Mouse-ear cress).